Consider the following 103-residue polypeptide: Large ribosomal subunit protein bL21 (103 aa).

It belongs to the bacterial ribosomal protein bL21 family. As to quaternary structure, part of the 50S ribosomal subunit. Contacts protein L20.

This protein binds to 23S rRNA in the presence of protein L20. The polypeptide is Large ribosomal subunit protein bL21 (Mycolicibacterium paratuberculosis (strain ATCC BAA-968 / K-10) (Mycobacterium paratuberculosis)).